Consider the following 1248-residue polypeptide: von Willebrand factor A domain-containing protein 5B2 (1248 aa).

Residues 1-138 form the VIT domain; the sequence is MPGLYCPTSW…TMTVTLCSSR (138 aa). Residues 184–204 are disordered; it reads VGSPEEERPTWEQPTATPDVF. The region spanning 354-527 is the VWFA domain; that stretch reads ELLFLLDGSG…KALEPALSDI (174 aa). 5 disordered regions span residues 590–650, 672–710, 751–789, 1008–1037, and 1126–1168; these read PEEV…SSDT, SASPEPGPGSTCSSESPGSQGPGSPSGSRPLDPPSQQGC, ALAGRSLSSPSGRANPVPGRARHPSLDAIPDGLGPEPGQ, SKSALGEPISPTGDHHGLPHQPPASSRLSL, and DSAT…SSDL. A compositionally biased stretch (polar residues) spans 595-619; the sequence is SATSPGTEPTHTTEPLGTGTVSAEL. Low complexity-rich tracts occupy residues 684–701, 751–764, and 780–789; these read SSESPGSQGPGSPSGSRP, ALAGRSLSSPSGRA, and PDGLGPEPGQ. A compositionally biased stretch (low complexity) spans 1127–1145; the sequence is SATASCSQSPSSGSEGPGQ. Residues 1159 to 1168 show a composition bias toward basic and acidic residues; that stretch reads GMERQDSSDL.

The protein is von Willebrand factor A domain-containing protein 5B2 (Vwa5b2) of Mus musculus (Mouse).